The following is a 463-amino-acid chain: Alpha-L-arabinofuranosidase B (463 aa).

The signal sequence occupies residues 1–26; the sequence is MIPQLNRNYAWAIALGLVARSSLVSA. Residues 27–308 form a catalytic region; sequence GPCDIYASGG…ILGIGGHNSK (282 aa). A disulfide bridge connects residues C29 and C39. N81 is a glycosylation site (N-linked (GlcNAc...) asparagine). 2 disulfides stabilise this stretch: C89–C94 and C184–C185. Position 227 (D227) interacts with substrate. Residue E229 is the Nucleophile of the active site. Residue N230 participates in substrate binding. N-linked (GlcNAc...) asparagine glycosylation is present at N280. A substrate-binding site is contributed by G304. Positions 309–463 are ABD; that stretch reads LTVGSSISLR…VSWVVSASFA (155 aa). N332 is a glycosylation site (N-linked (GlcNAc...) asparagine). An intrachain disulfide couples C366 to C404. Substrate-binding residues include H381, N383, F384, H428, D430, L433, and D453.

This sequence belongs to the glycosyl hydrolase 54 family. In terms of processing, residue Asn-280 is mannosylated with up to 7 mannose residues.

It is found in the secreted. The catalysed reaction is Hydrolysis of terminal non-reducing alpha-L-arabinofuranoside residues in alpha-L-arabinosides.. The protein operates within glycan metabolism; L-arabinan degradation. Secreted alpha-L-arabinofuranosidase that actively hydrolyzes p-NP-alpha-L-arabinofuranoside and is specific for furanose configuration of the carbohydrate ring. Also exhibits significant activity against polymeric arabinose-containing substrates such as arabinan and arabinoxylan, a major component of plant hemicellulose. This is Alpha-L-arabinofuranosidase B (abfB) from Penicillium canescens.